The chain runs to 260 residues: MICOS complex subunit mic25-a (260 aa).

The segment at 1-92 is disordered; it reads MGGSESTGRK…KPTARGVGHQ (92 aa). Gly-2 carries N-myristoyl glycine lipidation. The span at 28–39 shows a compositional bias: basic and acidic residues; it reads RLSDEVVNRMKD. Over residues 48-64 the composition is skewed to low complexity; that stretch reads STSTASGTTSGPTTFPS. The stretch at 94–187 forms a coiled coil; that stretch reads AEEDLYRRYE…LNSIEKKNLE (94 aa). The CHCH domain occupies 213–255; the sequence is DPVCMDLQSNILKCYAENKQERLNCSDLAKEYGKCVSAAQKNL. Short sequence motifs (cx9C motif) lie at residues 216–226 and 237–247; these read CMDLQSNILKC and CSDLAKEYGKC. 2 cysteine pairs are disulfide-bonded: Cys-216/Cys-247 and Cys-226/Cys-237.

It belongs to the MICOS complex subunit Mic19 family. Metazoan Mic25 subfamily. Component of the mitochondrial contact site and cristae organizing system (MICOS) complex (also known as MINOS or MitOS complex).

The protein localises to the mitochondrion inner membrane. In terms of biological role, component of the MICOS complex, a large protein complex of the mitochondrial inner membrane that plays crucial roles in the maintenance of crista junctions, inner membrane architecture, and formation of contact sites to the outer membrane. The polypeptide is MICOS complex subunit mic25-a (chchd6-a) (Xenopus laevis (African clawed frog)).